A 927-amino-acid chain; its full sequence is Phospholipase D beta 2 (927 aa).

The 134-residue stretch at 104 to 237 folds into the C2 domain; the sequence is PFGKASLKVL…YSGARIEGTY (134 aa). D299 serves as a coordination point for Ca(2+). One can recognise a PLD phosphodiesterase 1 domain in the interval 439–474; the sequence is TIYTHHQKNLIVDADAGGNRRKIVAFVGGLDLCDGR. Active-site residues include H444, K446, and D451. Residue H444 coordinates a 1,2-diacyl-sn-glycero-3-phosphate. Residues H480 and H512 each coordinate Ca(2+). Residues Q640 and H778 each coordinate a 1,2-diacyl-sn-glycero-3-phosphate. Residues 773 to 800 enclose the PLD phosphodiesterase 2 domain; the sequence is FMIYVHSKGMVVDDEYVVIGSANINQRS. Residues H778, K780, and D785 contribute to the active site. A Ca(2+)-binding site is contributed by E841.

The protein belongs to the phospholipase D family. C2-PLD subfamily. The cofactor is Ca(2+). In terms of tissue distribution, expressed in stems, and to a lower amount in leaves, flowers and siliques.

The protein resides in the cytoplasm. It localises to the membrane. The catalysed reaction is a 1,2-diacyl-sn-glycero-3-phosphocholine + H2O = a 1,2-diacyl-sn-glycero-3-phosphate + choline + H(+). Inhibited by neomycin. Functionally, hydrolyzes glycerol-phospholipids at the terminal phosphodiesteric bond to generate phosphatidic acids (PA). Plays an important role in various cellular processes, including phytohormone action, vesicular trafficking, secretion, cytoskeletal arrangement, meiosis, tumor promotion, pathogenesis, membrane deterioration and senescence. Can use phosphatidylserine or N-acylphosphatidylethanolamine as substrates. The chain is Phospholipase D beta 2 from Arabidopsis thaliana (Mouse-ear cress).